The chain runs to 397 residues: Riboflavin biosynthesis protein RibBA (397 aa).

Residues Met1–His199 are DHBP synthase. D-ribulose 5-phosphate-binding positions include Arg26–Glu27, Asp31, Arg138–Thr142, and Glu162. Residue Glu27 participates in Mg(2+) binding. A Mg(2+)-binding site is contributed by His141. The tract at residues His200 to Leu397 is GTP cyclohydrolase II. Arg250–Glu254 provides a ligand contact to GTP. 3 residues coordinate Zn(2+): Cys255, Cys266, and Cys268. GTP is bound by residues Gln271, Glu293 to Arg295, and Thr315. Asp327 functions as the Proton acceptor; for GTP cyclohydrolase activity in the catalytic mechanism. Arg329 functions as the Nucleophile; for GTP cyclohydrolase activity in the catalytic mechanism. 2 residues coordinate GTP: Thr350 and Lys355.

This sequence in the N-terminal section; belongs to the DHBP synthase family. In the C-terminal section; belongs to the GTP cyclohydrolase II family. Mg(2+) serves as cofactor. Mn(2+) is required as a cofactor. Requires Zn(2+) as cofactor.

It catalyses the reaction D-ribulose 5-phosphate = (2S)-2-hydroxy-3-oxobutyl phosphate + formate + H(+). It carries out the reaction GTP + 4 H2O = 2,5-diamino-6-hydroxy-4-(5-phosphoribosylamino)-pyrimidine + formate + 2 phosphate + 3 H(+). It functions in the pathway cofactor biosynthesis; riboflavin biosynthesis; 2-hydroxy-3-oxobutyl phosphate from D-ribulose 5-phosphate: step 1/1. It participates in cofactor biosynthesis; riboflavin biosynthesis; 5-amino-6-(D-ribitylamino)uracil from GTP: step 1/4. Functionally, catalyzes the conversion of D-ribulose 5-phosphate to formate and 3,4-dihydroxy-2-butanone 4-phosphate. Catalyzes the conversion of GTP to 2,5-diamino-6-ribosylamino-4(3H)-pyrimidinone 5'-phosphate (DARP), formate and pyrophosphate. The sequence is that of Riboflavin biosynthesis protein RibBA from Bacillus cereus (strain G9842).